A 130-amino-acid polypeptide reads, in one-letter code: Small ribosomal subunit protein uS9 (130 aa).

This sequence belongs to the universal ribosomal protein uS9 family.

The polypeptide is Small ribosomal subunit protein uS9 (Streptococcus thermophilus (strain CNRZ 1066)).